We begin with the raw amino-acid sequence, 220 residues long: uncharacterized protein (220 aa).

The next 7 helical transmembrane spans lie at 6–26 (FSILVDFAAGGLVLASVLIVW), 33–53 (IVRLLAWQGAALAAIPLLRGI), 59–79 (ALIAVGIAVLALRALVLPWLL), 103–123 (LLITAGLTLTAFAITQPVVNL), 126–146 (GVTINAVPAAFAVVLIALFVM), 157–177 (AGFLMLDNGIAATAFLLTAGV), and 179–199 (LIVELGASLDVLFAVIVIGVL).

It is found in the cell membrane. This is an uncharacterized protein from Mycobacterium tuberculosis (strain ATCC 25618 / H37Rv).